Reading from the N-terminus, the 306-residue chain is Serine/threonine-protein kinase KIN28 (306 aa).

One can recognise a Protein kinase domain in the interval 7–290; that stretch reads YTKEKKVGEG…AVQCLESDYF (284 aa). ATP is bound by residues 13–21 and K36; that span reads VGEGTYAVV. The active-site Proton acceptor is D129. T162 carries the post-translational modification Phosphothreonine; by CAK.

This sequence belongs to the protein kinase superfamily. CMGC Ser/Thr protein kinase family. CDC2/CDKX subfamily. CCL1 and KIN28 form the TFIIK complex, a component of the TFIIH holo complex. Component of a complex consisting of KIN28, CCL1 and TFB3. Interacts with TFB3. Also interacts with HNT1 and HOG1. Post-translationally, phosphorylation of Thr-162 regulates the affinity of interaction between CCL1, KIN28 and TFB3. Thr-162 phosphorylation does not vary through the cell cycle and is necessary for full kinase activity.

The protein localises to the nucleus. It carries out the reaction [DNA-directed RNA polymerase] + ATP = phospho-[DNA-directed RNA polymerase] + ADP + H(+). Functionally, catalytic component of the TFIIK complex (KIN28-CCL1 dimer) which is the protein kinase component of transcription factor IIH (TFIIH) and phosphorylates the C-terminal domain of RNA polymerase II during transition from transcription to elongation after preinitiation complex (PIC) formation, thereby positively regulating transcription. TFIIH (or factor B) is essential for both basal and activated transcription, and is involved in nucleotide excision repair (NER) of damaged DNA. TFIIH has DNA-dependent ATPase activity and is essential for polymerase II transcription in vitro. Essential for cell proliferation. The protein is Serine/threonine-protein kinase KIN28 (KIN28) of Saccharomyces cerevisiae (strain ATCC 204508 / S288c) (Baker's yeast).